A 125-amino-acid polypeptide reads, in one-letter code: Large ribosomal subunit protein uL30 (125 aa).

Positions 1-61 are large ribosomal subunit protein uL30; sequence MSKLKVKLLR…HLVGVAYRID (61 aa). Residues 62-125 form a unknown region; it reads FSGDIPTVER…KNWKGEEVEL (64 aa).

Belongs to the universal ribosomal protein uL30 family. Part of the 50S ribosomal subunit.

This Aquifex aeolicus (strain VF5) protein is Large ribosomal subunit protein uL30.